Reading from the N-terminus, the 771-residue chain is Semaphorin-3A (771 aa).

The N-terminal stretch at 1–20 (MGWLTRIVCLFWGVLLTARA) is a signal peptide. One can recognise a Sema domain in the interval 31–514 (RLKLSYKEML…STAGVAQLPL (484 aa)). Residue asparagine 53 is glycosylated (N-linked (GlcNAc...) asparagine). A disulfide bridge links cysteine 103 with cysteine 114. Asparagine 125 carries N-linked (GlcNAc...) asparagine glycosylation. 4 cysteine pairs are disulfide-bonded: cysteine 132/cysteine 141, cysteine 269/cysteine 381, cysteine 293/cysteine 341, and cysteine 517/cysteine 535. An Ig-like C2-type domain is found at 580-664 (PEERIIYGVE…GFIQTLLKVT (85 aa)). Asparagine 590 carries N-linked (GlcNAc...) asparagine glycosylation. A disulfide bond links cysteine 649 and cysteine 722. Residues 728–737 (RDRKQRRQRP) show a composition bias toward basic residues. Positions 728–771 (RDRKQRRQRPGHTPGNSNKWKHLQENKKGRNRRTHEFERAPRSV) are disordered. Residues 749-771 (HLQENKKGRNRRTHEFERAPRSV) are compositionally biased toward basic and acidic residues.

It belongs to the semaphorin family. In terms of assembly, interacts with PLXND1. In terms of tissue distribution, expressed in the dorsal root ganglia.

It is found in the secreted. In terms of biological role, involved in the development of the olfactory system and in neuronal control of puberty. Induces the collapse and paralysis of neuronal growth cones. Could serve as a ligand that guides specific growth cones by a motility-inhibiting mechanism. Binds to the complex neuropilin-1/plexin-1. This chain is Semaphorin-3A (SEMA3A), found in Homo sapiens (Human).